The sequence spans 397 residues: Enoyl-[acyl-carrier-protein] reductase [NADH] FabV (397 aa).

NAD(+)-binding positions include 48–53 (GASTGY), 74–75 (FE), 111–112 (DA), and 139–140 (LA). Tyr-225 is a binding site for substrate. Tyr-235 (proton donor) is an active-site residue. NAD(+) is bound by residues Lys-244 and 273 to 275 (VVT).

This sequence belongs to the TER reductase family. As to quaternary structure, monomer.

The enzyme catalyses a 2,3-saturated acyl-[ACP] + NAD(+) = a (2E)-enoyl-[ACP] + NADH + H(+). Its pathway is lipid metabolism; fatty acid biosynthesis. Its activity is regulated as follows. Resistant to triclosan. In terms of biological role, involved in the final reduction of the elongation cycle of fatty acid synthesis (FAS II). Catalyzes the NADH-dependent reduction of the carbon-carbon double bond in the enoyl moiety that is covalently linked to an acyl carrier protein (ACP). In Aeromonas salmonicida (strain A449), this protein is Enoyl-[acyl-carrier-protein] reductase [NADH] FabV.